The primary structure comprises 359 residues: 5-amino-6-(D-ribitylamino)uracil--L-tyrosine 4-hydroxyphenyl transferase (359 aa).

Positions 45–282 constitute a Radical SAM core domain; that stretch reads VTYVLNANIN…VYAISRIFFK (238 aa). [4Fe-4S] cluster contacts are provided by C59, C63, and C66.

Belongs to the radical SAM superfamily. CofH family. As to quaternary structure, consists of two subunits, CofG and CofH. It depends on [4Fe-4S] cluster as a cofactor.

The catalysed reaction is 5-amino-6-(D-ribitylamino)uracil + L-tyrosine + S-adenosyl-L-methionine = 5-amino-5-(4-hydroxybenzyl)-6-(D-ribitylimino)-5,6-dihydrouracil + 2-iminoacetate + 5'-deoxyadenosine + L-methionine + H(+). Its pathway is cofactor biosynthesis; coenzyme F0 biosynthesis. In terms of biological role, catalyzes the radical-mediated synthesis of 5-amino-5-(4-hydroxybenzyl)-6-(D-ribitylimino)-5,6-dihydrouracil from 5-amino-6-(D-ribitylamino)uracil and L-tyrosine. This Methanococcus vannielii (strain ATCC 35089 / DSM 1224 / JCM 13029 / OCM 148 / SB) protein is 5-amino-6-(D-ribitylamino)uracil--L-tyrosine 4-hydroxyphenyl transferase.